Reading from the N-terminus, the 77-residue chain is UPF0401 protein c3666 (77 aa).

Belongs to the UPF0401 family.

In Escherichia coli O6:H1 (strain CFT073 / ATCC 700928 / UPEC), this protein is UPF0401 protein c3666.